A 356-amino-acid chain; its full sequence is MEIKYRPEELTKLPRSVEYREGKVYMINQRLLPREFKVEEFTTVEAVAEAIKNMTVRGAPAIGAAAAFGLALYAETSKAKTKDEFFDGFYRAYETLKNTRPTAVNLFWALNRIKKLVEEHREDSLDEIKRLIVEEAQKIADEDVEANLRMGHYGAEVLPEGNILTHCNAGSLATVHLGTVGAVVRVMHKEGTLKLLWLDETRPVLQGARLSAWEYSYDGLNVKLIADNAAAFVMQQGKVDAIIVGADRIVANGDFANKIGTYMLAVLAKEHGIPFFTVAPLSSIDMSLSSGKEIPIEERSPEEVLTCGGCRIAPDVPVYNPAFDVTPHKYLTGIITDRGVVWPPFKRNLKKLFETL.

Substrate-binding positions include 57–59 (RGA), Arg100, and Gln206. The active-site Proton donor is Asp247. A substrate-binding site is contributed by 257–258 (NK).

The protein belongs to the eIF-2B alpha/beta/delta subunits family. MtnA subfamily.

It catalyses the reaction 5-(methylsulfanyl)-alpha-D-ribose 1-phosphate = 5-(methylsulfanyl)-D-ribulose 1-phosphate. In terms of biological role, catalyzes the interconversion of methylthioribose-1-phosphate (MTR-1-P) into methylthioribulose-1-phosphate (MTRu-1-P). This chain is Putative methylthioribose-1-phosphate isomerase, found in Pyrococcus furiosus (strain ATCC 43587 / DSM 3638 / JCM 8422 / Vc1).